A 907-amino-acid chain; its full sequence is MESRIWCLVVCVNLCIVCLGAAVSSSSTRGTSATHSHHSSHTTSAAHSRSGSVSQRVTSSQTVSHGVNETIYNTTLKYGDVVGVNTTKYPYRVCSMAQGTDLIRFERNIVCTSMKPINEDLDEGIMVVYKRNIVAHTFKVRVYQKVLTFRRSYAYIHTTYLLGSNTEYVAPPMWEIHHINSHSQCYSSYSRVIAGTVFVAYHRDSYENKTMQLMPDDYSNTHSTRYVTVKDQWHSRGSTWLYRETCNLNCMVTITTARSKYPYHFFATSTGDVVDISPFYNGTNRNASYFGENADKFFIFPNYTIVSDFGRPNSALETHRLVAFLERADSVISWDIQDEKNVTCQLTFWEASERTIRSEAEDSYHFSSAKMTATFLSKKQEVNMSDSALDCVRDEAINKLQQIFNTSYNQTYEKYGNVSVFETTGGLVVFWQGIKQKSLVELERLANRSSLNLTHNRTKRSTDGNNATHLSNMESVHNLVYAQLQFTYDTLRGYINRALAQIAEAWCVDQRRTLEVFKELSKINPSAILSAIYNKPIAARFMGDVLGLASCVTINQTSVKVLRDMNVKESPGRCYSRPVVIFNFANSSYVQYGQLGEDNEILLGNHRTEECQLPSLKIFIAGNSAYEYVDYLFKRMIDLSSISTVDSMIALDIDPLENTDFRVLELYSQKELRSSNVFDLEEIMREFNSYKQRVKYVEDKVVDPLPPYLKGLDDLMSGLGAAGKAVGVAIGAVGGAVASVVEGVATFLKNPFGAFTIILVAIAVVIIIYLIYTRQRRLCMQPLQNLFPYLVSADGTTVTSGNTKDTSLQAPPSYEESVYNSGRKGPGPPSSDASTAAPPYTNEQAYQMLLALVRLDAEQRAQQNGTDSLDGQTGTQDKGQKPNLLDRLRHRKNGYRHLKDSDEEENV.

An N-terminal signal peptide occupies residues 1–22; sequence MESRIWCLVVCVNLCIVCLGAA. The Virion surface portion of the chain corresponds to 23–751; it reads VSSSSTRGTS…EGVATFLKNP (729 aa). A disordered region spans residues 29 to 62; sequence RGTSATHSHHSSHTTSAAHSRSGSVSQRVTSSQT. Residues 41-62 are compositionally biased toward low complexity; the sequence is HTTSAAHSRSGSVSQRVTSSQT. Asn-68, Asn-73, and Asn-85 each carry an N-linked (GlcNAc...) asparagine; by host glycan. 4 disulfides stabilise this stretch: Cys-94–Cys-551, Cys-111–Cys-507, Cys-185–Cys-250, and Cys-344–Cys-391. Positions 152–158 are involved in fusion and/or binding to host membrane; it reads SYAYIHT. Asn-208 carries an N-linked (GlcNAc...) asparagine; by host glycan. An involved in fusion and/or binding to host membrane region spans residues 237-244; it reads GSTWLYRE. Asn-281, Asn-286, Asn-302, Asn-341, Asn-383, Asn-405, Asn-409, Asn-417, Asn-447, Asn-452, Asn-456, Asn-466, Asn-555, and Asn-586 each carry an N-linked (GlcNAc...) asparagine; by host glycan. Cys-574 and Cys-611 are disulfide-bonded. Hydrophobic membrane proximal region regions lie at residues 697 to 749 and 708 to 748; these read VEDK…TFLK and YLKG…ATFL. The chain crosses the membrane as a helical span at residues 752–772; that stretch reads FGAFTIILVAIAVVIIIYLIY. Residues 773-907 lie on the Intravirion side of the membrane; it reads TRQRRLCMQP…LKDSDEEENV (135 aa). Polar residues-rich tracts occupy residues 798 to 810 and 860 to 877; these read VTSGNTKDTSLQA and RAQQNGTDSLDGQTGTQD. 2 disordered regions span residues 798-838 and 860-907; these read VTSG…TAAP and RAQQ…EENV. A compositionally biased stretch (basic and acidic residues) spans 878–887; that stretch reads KGQKPNLLDR. Positions 895–898 match the Internalization motif motif; that stretch reads YRHL.

Belongs to the herpesviridae glycoprotein B family. Homotrimer; disulfide-linked. Binds to heparan sulfate proteoglycans. Interacts with gH/gL heterodimer. Interacts with host C-type lectin CD209/DC-SIGN. Interacts with host ITGB1, EGFR, and PDGFRA. In terms of processing, a proteolytic cleavage by host furin generates two subunits that remain linked by disulfide bonds.

It localises to the virion membrane. Its subcellular location is the host cell membrane. It is found in the host endosome membrane. The protein localises to the host Golgi apparatus membrane. Its function is as follows. Envelope glycoprotein that plays a role in host cell entry, cell to-cell virus transmission, and fusion of infected cells. May be involved in the initial attachment via binding to heparan sulfate together with the gM/gN complex that binds heparin with higher affinity. Interacts with host integrin ITGB1, PDGFRA and EGFR that likely serve as postattachment entry receptors. Also participates in the fusion of viral and cellular membranes leading to virus entry into the host cell. Membrane fusion is mediated by the fusion machinery composed at least of gB and the heterodimer gH/gL. The chain is Envelope glycoprotein B from Homo sapiens (Human).